The following is a 103-amino-acid chain: Large ribosomal subunit protein bL21 (103 aa).

Belongs to the bacterial ribosomal protein bL21 family. As to quaternary structure, part of the 50S ribosomal subunit. Contacts protein L20.

This protein binds to 23S rRNA in the presence of protein L20. In Cupriavidus pinatubonensis (strain JMP 134 / LMG 1197) (Cupriavidus necator (strain JMP 134)), this protein is Large ribosomal subunit protein bL21.